A 187-amino-acid polypeptide reads, in one-letter code: Peptide deformylase (187 aa).

Fe cation-binding residues include Cys-107 and His-149. The active site involves Glu-150. Residue His-153 coordinates Fe cation.

Belongs to the polypeptide deformylase family. The cofactor is Fe(2+).

The catalysed reaction is N-terminal N-formyl-L-methionyl-[peptide] + H2O = N-terminal L-methionyl-[peptide] + formate. Functionally, removes the formyl group from the N-terminal Met of newly synthesized proteins. Requires at least a dipeptide for an efficient rate of reaction. N-terminal L-methionine is a prerequisite for activity but the enzyme has broad specificity at other positions. The polypeptide is Peptide deformylase (Microchaete diplosiphon (Fremyella diplosiphon)).